A 380-amino-acid polypeptide reads, in one-letter code: Protein phosphatase methylesterase 1 (380 aa).

Residues 1 to 38 (MSALEKSMHLGRLPSRPPLPGSGGSQSGAKMRMGPGRK) are disordered. Ser-15 is subject to Phosphoserine. An Asymmetric dimethylarginine; alternate modification is found at Arg-16. Arg-16 bears the Omega-N-methylarginine; alternate mark. Ser-42 is subject to Phosphoserine. Residues Ser-156 and Asp-181 contribute to the active site. The segment covering 255 to 265 (IEEEEEDEEGS) has biased composition (acidic residues). Residues 255 to 280 (IEEEEEDEEGSESVNKRKKEDDMETK) are disordered. Positions 268-280 (VNKRKKEDDMETK) are enriched in basic and acidic residues. The active site involves His-349.

The protein belongs to the AB hydrolase superfamily. In terms of assembly, binds PPP2CA and PPP2CB. Phosphorylated by SIK1 following increases in intracellular sodium, leading to dissociation from the protein phosphatase 2A (PP2A) complex and subsequent dephosphorylation of sodium/potassium-transporting ATPase ATP1A1.

The enzyme catalyses [phosphatase 2A protein]-C-terminal L-leucine methyl ester + H2O = [phosphatase 2A protein]-C-terminal L-leucine + methanol + H(+). Functionally, demethylates proteins that have been reversibly carboxymethylated. Demethylates PPP2CB (in vitro) and PPP2CA. Binding to PPP2CA displaces the manganese ion and inactivates the enzyme. The chain is Protein phosphatase methylesterase 1 (PPME1) from Bos taurus (Bovine).